A 606-amino-acid polypeptide reads, in one-letter code: NADH-ubiquinone oxidoreductase chain 5 (606 aa).

The next 15 helical transmembrane spans lie at 4-24 (FSSL…MMSL), 43-63 (AFIT…ELII), 87-107 (MMFT…SMWY), 117-137 (FFKY…ANNL), 140-160 (LFIG…WWYG), 171-191 (AVLY…WFLT), 213-233 (LIGL…HPWL), 241-261 (TPVS…FLLI), 272-292 (FIQS…AMCA), 310-330 (LGLM…LHIC), 366-386 (MPFT…MPFL), 413-433 (LIAT…ALLG), 457-477 (LLIG…PTTI), 482-502 (MPYY…ILAL), and 582-602 (GLIK…MMLF).

Core subunit of respiratory chain NADH dehydrogenase (Complex I) which is composed of 45 different subunits.

It is found in the mitochondrion inner membrane. It catalyses the reaction a ubiquinone + NADH + 5 H(+)(in) = a ubiquinol + NAD(+) + 4 H(+)(out). In terms of biological role, core subunit of the mitochondrial membrane respiratory chain NADH dehydrogenase (Complex I) which catalyzes electron transfer from NADH through the respiratory chain, using ubiquinone as an electron acceptor. Essential for the catalytic activity and assembly of complex I. The chain is NADH-ubiquinone oxidoreductase chain 5 (MT-ND5) from Bos indicus (Zebu).